The chain runs to 160 residues: Small ribosomal subunit protein uS7 (160 aa).

It belongs to the universal ribosomal protein uS7 family. Part of the 30S ribosomal subunit. Contacts proteins S9 and S11.

Its function is as follows. One of the primary rRNA binding proteins, it binds directly to 16S rRNA where it nucleates assembly of the head domain of the 30S subunit. Is located at the subunit interface close to the decoding center, probably blocks exit of the E-site tRNA. This is Small ribosomal subunit protein uS7 from Anaplasma marginale (strain Florida).